Consider the following 145-residue polypeptide: Putative transcriptional regulatory protein PYRAB13000 (145 aa).

This sequence belongs to the Tfx family.

Functionally, putative transcriptional regulator. This Pyrococcus abyssi (strain GE5 / Orsay) protein is Putative transcriptional regulatory protein PYRAB13000.